We begin with the raw amino-acid sequence, 344 residues long: Fe-S cluster assembly protein DRE2 (344 aa).

The N-terminal SAM-like domain stretch occupies residues 1-160 (MTSNILLLLH…KKLNNDNAST (160 aa)). The tract at residues 154 to 179 (NNDNASTPGLTDSSAGTSEDETATVS) is disordered. Residues 155-170 (NDNASTPGLTDSSAGT) show a composition bias toward polar residues. Residues 161–223 (PGLTDSSAGT…NDLIAESNKY (63 aa)) are linker. Residues Cys231, Cys243, Cys246, and Cys248 each coordinate [2Fe-2S] cluster. The fe-S binding site A stretch occupies residues 231 to 248 (CELPNGKKRKKACKDCTC). Cys313, Cys316, Cys324, and Cys327 together coordinate [4Fe-4S] cluster. Short sequence motifs (cx2C motif) lie at residues 313–316 (CGSC) and 324–327 (CDGC). The interval 313–327 (CGSCSLGDAFRCDGC) is fe-S binding site B.

It belongs to the anamorsin family. As to quaternary structure, monomer. Interacts with TAH18. Interacts with MIA40. The cofactor is [2Fe-2S] cluster. Requires [4Fe-4S] cluster as cofactor.

The protein resides in the cytoplasm. It localises to the mitochondrion intermembrane space. Functionally, component of the cytosolic iron-sulfur (Fe-S) protein assembly (CIA) machinery required for the maturation of extramitochondrial Fe-S proteins. Part of an electron transfer chain functioning in an early step of cytosolic Fe-S biogenesis, facilitating the de novo assembly of a [4Fe-4S] cluster on the scaffold complex CFD1-NBP35. Electrons are transferred to DRE2 from NADPH via the FAD- and FMN-containing protein TAH18. TAH18-DRE2 are also required for the assembly of the diferric tyrosyl radical cofactor of ribonucleotide reductase (RNR), probably by providing electrons for reduction during radical cofactor maturation in the catalytic small subunit RNR2. In Candida tropicalis (strain ATCC MYA-3404 / T1) (Yeast), this protein is Fe-S cluster assembly protein DRE2.